The following is a 177-amino-acid chain: ATP synthase subunit delta (177 aa).

The protein belongs to the ATPase delta chain family. In terms of assembly, F-type ATPases have 2 components, F(1) - the catalytic core - and F(0) - the membrane proton channel. F(1) has five subunits: alpha(3), beta(3), gamma(1), delta(1), epsilon(1). F(0) has three main subunits: a(1), b(2) and c(10-14). The alpha and beta chains form an alternating ring which encloses part of the gamma chain. F(1) is attached to F(0) by a central stalk formed by the gamma and epsilon chains, while a peripheral stalk is formed by the delta and b chains.

It localises to the cell inner membrane. F(1)F(0) ATP synthase produces ATP from ADP in the presence of a proton or sodium gradient. F-type ATPases consist of two structural domains, F(1) containing the extramembraneous catalytic core and F(0) containing the membrane proton channel, linked together by a central stalk and a peripheral stalk. During catalysis, ATP synthesis in the catalytic domain of F(1) is coupled via a rotary mechanism of the central stalk subunits to proton translocation. Its function is as follows. This protein is part of the stalk that links CF(0) to CF(1). It either transmits conformational changes from CF(0) to CF(1) or is implicated in proton conduction. This chain is ATP synthase subunit delta, found in Edwardsiella ictaluri (strain 93-146).